Here is a 226-residue protein sequence, read N- to C-terminus: Leucyl/phenylalanyl-tRNA--protein transferase (226 aa).

This sequence belongs to the L/F-transferase family.

Its subcellular location is the cytoplasm. It catalyses the reaction N-terminal L-lysyl-[protein] + L-leucyl-tRNA(Leu) = N-terminal L-leucyl-L-lysyl-[protein] + tRNA(Leu) + H(+). The catalysed reaction is N-terminal L-arginyl-[protein] + L-leucyl-tRNA(Leu) = N-terminal L-leucyl-L-arginyl-[protein] + tRNA(Leu) + H(+). The enzyme catalyses L-phenylalanyl-tRNA(Phe) + an N-terminal L-alpha-aminoacyl-[protein] = an N-terminal L-phenylalanyl-L-alpha-aminoacyl-[protein] + tRNA(Phe). Its function is as follows. Functions in the N-end rule pathway of protein degradation where it conjugates Leu, Phe and, less efficiently, Met from aminoacyl-tRNAs to the N-termini of proteins containing an N-terminal arginine or lysine. In Bradyrhizobium sp. (strain ORS 278), this protein is Leucyl/phenylalanyl-tRNA--protein transferase.